Consider the following 165-residue polypeptide: Protein SprT (165 aa).

The SprT-like domain occupies 22–163 (LAQANLKLDR…RCVHCGEPLV (142 aa)). A Zn(2+)-binding site is contributed by His-78. The active site involves Glu-79. His-82 contacts Zn(2+).

This sequence belongs to the SprT family. The cofactor is Zn(2+).

It is found in the cytoplasm. The sequence is that of Protein SprT from Salmonella paratyphi A (strain ATCC 9150 / SARB42).